Consider the following 1784-residue polypeptide: Protein mel-28 (1784 aa).

Residues 1 to 956 (MDNENSSIFK…QNDDEDMPEV (956 aa)) are required for nuclear envelope and kinetochore localization. The interval 566–778 (GKIEEFCQLA…TSPEDSEHSE (213 aa)) is required for association with mitotic chromosomes. Positions 846-1071 (APMTVTIGKH…HNSILKTAKG (226 aa)) are important for nuclear localization. Disordered regions lie at residues 945–994 (KVQN…AKRI) and 1115–1784 (ETMT…RAKQ). A compositionally biased stretch (basic and acidic residues) spans 1126–1149 (GKHDEEKDSEKNVVDEMEEVKDQE). Composition is skewed to acidic residues over residues 1222 to 1232 (LEEEGEDEDIW) and 1266 to 1278 (VNEEEVVESEEVQ). A chromatin binding region spans residues 1239 to 1601 (FEVQMDEDCE…TTVDPSSSAL (363 aa)). The segment covering 1279 to 1293 (QDAKEPEKTEKRQEE) has biased composition (basic and acidic residues). Over residues 1297-1306 (EVMQPVIPEE) the composition is skewed to low complexity. Residues 1321–1336 (ELQEEPDIVPTGDEDT) are compositionally biased toward acidic residues. The segment covering 1337–1351 (ADKVQEQAVEEDRPP) has biased composition (basic and acidic residues). Positions 1352 to 1366 (SRNTRSSSVQKSTSQ) are enriched in polar residues. Residues 1367–1382 (VEDRDPKELVEEERPP) are compositionally biased toward basic and acidic residues. Residues 1383–1398 (SRNTRSASVQKSSNQE) show a composition bias toward polar residues. A compositionally biased stretch (basic and acidic residues) spans 1428 to 1444 (KVKDQKPEELIEEDRPP). Positions 1445–1459 (SRNTRSASAQKTVAA) are enriched in polar residues. A compositionally biased stretch (low complexity) spans 1533 to 1546 (AAASTSSSRAGSVT). Residues 1566-1576 (VQEEEEEEAEE) are compositionally biased toward acidic residues. Residues 1581–1606 (SRSTRSASVKNTTVDPSSSALASTKR) show a composition bias toward polar residues. The important for nuclear localization stretch occupies residues 1601–1784 (LASTKRTTSR…LLRSARRAKQ (184 aa)). The a.T hook 1 DNA-binding region spans 1630 to 1642 (TPKRGRPAKKDAG). The segment at 1630–1784 (TPKRGRPAKK…LLRSARRAKQ (155 aa)) is required for chromosome segregation, nuclear growth, nucleoplasmic accumulation and cell cycle timing, but not required for nuclear envelope and kinetochore localization. Residues 1716 to 1735 (AGTSKQSRSVTRSRASSIDV) show a composition bias toward polar residues. Residues 1746-1758 (KRGRGRPPKTVLE) constitute a DNA-binding region (a.T hook 2).

As to expression, ubiquitously expressed (at protein level).

It is found in the nucleus. Its subcellular location is the nucleoplasm. It localises to the nucleus envelope. The protein localises to the nucleus inner membrane. The protein resides in the nuclear pore complex. It is found in the chromosome. Its subcellular location is the centromere. It localises to the kinetochore. Functionally, nuclear envelope protein which has essential roles in assembly of nuclear pore complexes and in chromatin maintenance during the cell cycle. Appears to be a stable structural component of the nuclear envelope during interphase. In dividing cells, localizes to kinetochores during early stages of mitosis and then to chromatin during late mitosis. Important for several mitotic processes including chromosome condensation, kinetochore assembly, chromosome segregation and cell-cycle timing. In postmitotic cells, plays a role in the early steps of nuclear pore complex assembly by recruiting the nucleoporins npp-10 and npp-5 to chromatin. Also involved in meiotic chromosome segregation. May function downstream of the Ran GTPase signaling pathway. In Caenorhabditis elegans, this protein is Protein mel-28.